We begin with the raw amino-acid sequence, 141 residues long: Small ribosomal subunit protein uS19 (141 aa).

It belongs to the universal ribosomal protein uS19 family.

Protein S19 forms a complex with S13 that binds strongly to the 16S ribosomal RNA. The sequence is that of Small ribosomal subunit protein uS19 from Thermofilum pendens (strain DSM 2475 / Hrk 5).